Reading from the N-terminus, the 128-residue chain is Glycine cleavage system H protein (128 aa).

Residues 22–104 (TVLVGITDYA…YGEGWIFRLK (83 aa)) enclose the Lipoyl-binding domain. K63 carries the N6-lipoyllysine modification.

It belongs to the GcvH family. In terms of assembly, the glycine cleavage system is composed of four proteins: P, T, L and H. Requires (R)-lipoate as cofactor.

In terms of biological role, the glycine cleavage system catalyzes the degradation of glycine. The H protein shuttles the methylamine group of glycine from the P protein to the T protein. The polypeptide is Glycine cleavage system H protein (Thermus thermophilus (strain ATCC BAA-163 / DSM 7039 / HB27)).